A 440-amino-acid chain; its full sequence is Xaa-Pro dipeptidase (440 aa).

5 residues coordinate Mn(2+): Asp-244, Asp-255, His-335, Glu-380, and Glu-419.

The protein belongs to the peptidase M24B family. Bacterial-type prolidase subfamily. Requires Mn(2+) as cofactor.

The catalysed reaction is Xaa-L-Pro dipeptide + H2O = an L-alpha-amino acid + L-proline. Functionally, splits dipeptides with a prolyl residue in the C-terminal position. The sequence is that of Xaa-Pro dipeptidase from Shewanella baltica (strain OS195).